Reading from the N-terminus, the 609-residue chain is Albumin (609 aa).

The N-terminal stretch at 1 to 18 (MKWVTFISLLFLFSSAYS) is a signal peptide. The propeptide occupies 19-24 (RGVFRR). 3 consecutive Albumin domains span residues 19 to 210 (RGVF…DELR), 211 to 403 (DEGK…EFKP), and 404 to 601 (LVEE…KLVA). H27 contributes to the Cu cation binding site. S29 is modified (phosphoserine; by FAM20C). E30 lines the Ca(2+) pocket. A glycan (N-linked (Glc) (glycation) lysine) is linked at K36. Position 37 (D37) interacts with Ca(2+). A glycan (N-linked (Glc) (glycation) lysine; in vitro) is linked at K75. C77 and C86 are joined by a disulfide. Phosphoserine; by FAM20C occurs at positions 82 and 89. Residue H91 participates in Zn(2+) binding. 4 disulfides stabilise this stretch: C99-C115, C114-C125, C148-C193, and C192-C201. Phosphothreonine; by FAM20C is present on T107. K161 and K186 each carry an N-linked (Glc) (glycation) lysine; in vitro glycan. The N-linked (Glc) (glycation) lysine; in vitro glycan is linked to K223. 2 cysteine pairs are disulfide-bonded: C224-C270 and C269-C277. An N6-succinyllysine modification is found at K229. The N-linked (Glc) (glycation) lysine; in vitro glycan is linked to K249. A glycan (N-linked (Glc) (glycation) lysine) is linked at K257. Position 264 (K264) interacts with (4Z,15Z)-bilirubin IXalpha. A Ca(2+)-binding site is contributed by E268. The Zn(2+) site is built by H271 and D273. Ca(2+)-binding residues include D273, E276, D279, and D283. 2 disulfides stabilise this stretch: C289-C303 and C302-C313. S297 bears the Phosphoserine mark. K300 is a glycosylation site (N-linked (Glc) (glycation) lysine; in vitro). The N-linked (Glc) (glycation) lysine glycan is linked to K305. K337 carries N-linked (Glc) (glycation) lysine; in vitro glycosylation. 2 cysteine pairs are disulfide-bonded: C340–C385 and C384–C393. K341 carries an N-linked (Glc) (glycation) lysine glycan. N342 is a glycosylation site (N-linked (GlcNAc...) asparagine; in variant Redhill). A glycan (N-linked (Glc) (glycation) lysine; in vitro) is linked at K347. K375 carries an N-linked (Glc) (glycation) lysine glycan. Residues K402 and K437 are each glycosylated (N-linked (Glc) (glycation) lysine; in vitro). 4 cysteine pairs are disulfide-bonded: C416–C462, C461–C472, C485–C501, and C500–C511. Position 443 is a phosphoserine (S443). Phosphothreonine occurs at positions 444 and 446. Position 460 is an N6-succinyllysine (K460). A glycan (N-linked (Glc) (glycation) lysine) is linked at K463. K468 carries N-linked (Glc) (glycation) lysine; in vitro glycosylation. A Phosphoserine modification is found at S513. D518 is a glycosylation site (N-linked (GlcNAc...) asparagine; in variant Casebrook). 2 disulfide bridges follow: C538-C583 and C582-C591. K543 bears the N6-succinyllysine mark. K549 carries N-linked (Glc) (glycation) lysine glycosylation. K558 bears the N6-methyllysine; alternate mark. The N-linked (Glc) (glycation) lysine; alternate glycan is linked to K558. K560 and K569 each carry an N-linked (Glc) (glycation) lysine; in vitro glycan. K588 carries the N6-succinyllysine modification. A glycan (N-linked (Glc) (glycation) lysine; in vitro) is linked at K597.

It belongs to the ALB/AFP/VDB family. As to quaternary structure, interacts with FCGRT; this interaction regulates ALB homeostasis. Interacts with TASOR. In plasma, occurs in a covalently-linked complex with chromophore-bound alpha-1-microglobulin with molar ratio 1:2 and 1:1; this interaction does not prevent fatty acid binding to ALB. Kenitra variant is partially O-glycosylated at Thr-620. It has two new disulfide bonds Cys-600 to Cys-602 and Cys-601 to Cys-606. Post-translationally, glycated in diabetic patients. In terms of processing, phosphorylated by FAM20C in the extracellular medium. Acetylated on Lys-223 by acetylsalicylic acid. Plasma.

It localises to the secreted. Binds water, Ca(2+), Na(+), K(+), fatty acids, hormones, bilirubin and drugs. Its main function is the regulation of the colloidal osmotic pressure of blood. Major zinc transporter in plasma, typically binds about 80% of all plasma zinc. Major calcium and magnesium transporter in plasma, binds approximately 45% of circulating calcium and magnesium in plasma. Potentially has more than two calcium-binding sites and might additionally bind calcium in a non-specific manner. The shared binding site between zinc and calcium at residue Asp-273 suggests a crosstalk between zinc and calcium transport in the blood. The rank order of affinity is zinc &gt; calcium &gt; magnesium. Binds to the bacterial siderophore enterobactin and inhibits enterobactin-mediated iron uptake of E.coli from ferric transferrin, and may thereby limit the utilization of iron and growth of enteric bacteria such as E.coli. Does not prevent iron uptake by the bacterial siderophore aerobactin. This Homo sapiens (Human) protein is Albumin (ALB).